The following is a 423-amino-acid chain: Methylenetetrahydrofolate--tRNA-(uracil-5-)-methyltransferase TrmFO 2 (423 aa).

Position 8–13 (8–13) interacts with FAD; the sequence is GAGLSG.

This sequence belongs to the MnmG family. TrmFO subfamily. FAD is required as a cofactor.

It is found in the cytoplasm. It catalyses the reaction uridine(54) in tRNA + (6R)-5,10-methylene-5,6,7,8-tetrahydrofolate + NADH + H(+) = 5-methyluridine(54) in tRNA + (6S)-5,6,7,8-tetrahydrofolate + NAD(+). The enzyme catalyses uridine(54) in tRNA + (6R)-5,10-methylene-5,6,7,8-tetrahydrofolate + NADPH + H(+) = 5-methyluridine(54) in tRNA + (6S)-5,6,7,8-tetrahydrofolate + NADP(+). Its function is as follows. Catalyzes the folate-dependent formation of 5-methyl-uridine at position 54 (M-5-U54) in all tRNAs. This Mycoplasma capricolum subsp. capricolum (strain California kid / ATCC 27343 / NCTC 10154) protein is Methylenetetrahydrofolate--tRNA-(uracil-5-)-methyltransferase TrmFO 2.